A 522-amino-acid chain; its full sequence is Maturase K (522 aa).

Belongs to the intron maturase 2 family. MatK subfamily.

The protein resides in the plastid. It is found in the chloroplast. Its function is as follows. Usually encoded in the trnK tRNA gene intron. Probably assists in splicing its own and other chloroplast group II introns. The polypeptide is Maturase K (Tigridia pavonia (Mexican shell flower)).